The primary structure comprises 147 residues: Hemoglobin subunit beta (147 aa).

Residues 3–147 enclose the Globin domain; that stretch reads HWSCEEKQFI…VAHALALGYH (145 aa). Positions 64 and 93 each coordinate heme b.

Belongs to the globin family. As to quaternary structure, heterotetramer of two alpha-D chains and two beta chains. Red blood cells.

In terms of biological role, involved in oxygen transport from the lung to the various peripheral tissues. The sequence is that of Hemoglobin subunit beta (HBB) from Chelonoidis carbonarius (Red-footed tortoise).